The sequence spans 103 residues: Large ribosomal subunit protein bL21 (103 aa).

It belongs to the bacterial ribosomal protein bL21 family. As to quaternary structure, part of the 50S ribosomal subunit. Contacts protein L20.

This protein binds to 23S rRNA in the presence of protein L20. In Mycobacteroides abscessus (strain ATCC 19977 / DSM 44196 / CCUG 20993 / CIP 104536 / JCM 13569 / NCTC 13031 / TMC 1543 / L948) (Mycobacterium abscessus), this protein is Large ribosomal subunit protein bL21.